We begin with the raw amino-acid sequence, 631 residues long: Probable methyltransferase PMT16 (631 aa).

At 1-14 (MNLFTRISSRTKKA) the chain is on the cytoplasmic side. A helical; Signal-anchor for type II membrane protein membrane pass occupies residues 15–35 (NLYYVTLVALLCIASYLLGIW). Topologically, residues 36 to 631 (QNTAVNPRAA…EDKNNTSALS (596 aa)) are lumenal. Residues N61, N230, and N626 are each glycosylated (N-linked (GlcNAc...) asparagine).

The protein belongs to the methyltransferase superfamily.

The protein localises to the endoplasmic reticulum membrane. In Arabidopsis thaliana (Mouse-ear cress), this protein is Probable methyltransferase PMT16.